We begin with the raw amino-acid sequence, 100 residues long: Urease subunit gamma (100 aa).

Belongs to the urease gamma subunit family. As to quaternary structure, heterotrimer of UreA (gamma), UreB (beta) and UreC (alpha) subunits. Three heterotrimers associate to form the active enzyme.

It localises to the cytoplasm. The catalysed reaction is urea + 2 H2O + H(+) = hydrogencarbonate + 2 NH4(+). The protein operates within nitrogen metabolism; urea degradation; CO(2) and NH(3) from urea (urease route): step 1/1. This Laribacter hongkongensis (strain HLHK9) protein is Urease subunit gamma.